The sequence spans 122 residues: Large ribosomal subunit protein uL14 (122 aa).

It belongs to the universal ribosomal protein uL14 family. In terms of assembly, part of the 50S ribosomal subunit. Forms a cluster with proteins L3 and L19. In the 70S ribosome, L14 and L19 interact and together make contacts with the 16S rRNA in bridges B5 and B8.

Its function is as follows. Binds to 23S rRNA. Forms part of two intersubunit bridges in the 70S ribosome. The protein is Large ribosomal subunit protein uL14 of Bacillus cytotoxicus (strain DSM 22905 / CIP 110041 / 391-98 / NVH 391-98).